A 212-amino-acid chain; its full sequence is External core antigen (212 aa).

Positions 1 to 19 (MQLFHLCLIISCSCPTVQA) are cleaved as a signal peptide. The segment at 25–27 (GWL) is HBEAG. A disordered region spans residues 172 to 212 (LPETTVVRRRGRSPRRRTPSPRRRRSQSPRRRRSQSRESQC). The span at 178–205 (VRRRGRSPRRRTPSPRRRRSQSPRRRRS) shows a compositional bias: basic residues. The stretch at 184 to 190 (SPRRRTP) is one 1; half-length repeat. The segment at 184–206 (SPRRRTPSPRRRRSQSPRRRRSQ) is 3 X 8 AA repeats of S-P-R-R-R-R-S-Q. The propeptide occupies 184–212 (SPRRRTPSPRRRRSQSPRRRRSQSRESQC). Tandem repeats lie at residues 191 to 198 (SPRRRRSQ) and 199 to 206 (SPRRRRSQ).

Belongs to the orthohepadnavirus precore antigen family. In terms of assembly, homodimerizes. In terms of processing, phosphorylated. Cleaved by host furin.

The protein localises to the secreted. Its subcellular location is the host nucleus. Functionally, may regulate immune response to the intracellular capsid in acting as a T-cell tolerogen, by having an immunoregulatory effect which prevents destruction of infected cells by cytotoxic T-cells. This immune regulation may predispose to chronicity during perinatal infections and prevent severe liver injury during adult infections. The polypeptide is External core antigen (Hepatitis B virus genotype D (isolate Germany/1-91/1991) (HBV-D)).